Reading from the N-terminus, the 122-residue chain is Ribosome-binding factor A (122 aa).

The protein belongs to the RbfA family. Monomer. Binds 30S ribosomal subunits, but not 50S ribosomal subunits or 70S ribosomes.

It is found in the cytoplasm. In terms of biological role, one of several proteins that assist in the late maturation steps of the functional core of the 30S ribosomal subunit. Associates with free 30S ribosomal subunits (but not with 30S subunits that are part of 70S ribosomes or polysomes). Required for efficient processing of 16S rRNA. May interact with the 5'-terminal helix region of 16S rRNA. The chain is Ribosome-binding factor A from Cupriavidus pinatubonensis (strain JMP 134 / LMG 1197) (Cupriavidus necator (strain JMP 134)).